The primary structure comprises 175 residues: Large ribosomal subunit protein uL10 (175 aa).

Belongs to the universal ribosomal protein uL10 family. Part of the ribosomal stalk of the 50S ribosomal subunit. The N-terminus interacts with L11 and the large rRNA to form the base of the stalk. The C-terminus forms an elongated spine to which L12 dimers bind in a sequential fashion forming a multimeric L10(L12)X complex.

In terms of biological role, forms part of the ribosomal stalk, playing a central role in the interaction of the ribosome with GTP-bound translation factors. The sequence is that of Large ribosomal subunit protein uL10 from Alkalilimnicola ehrlichii (strain ATCC BAA-1101 / DSM 17681 / MLHE-1).